The chain runs to 231 residues: 6-phosphogluconolactonase (231 aa).

Belongs to the glucosamine/galactosamine-6-phosphate isomerase family. 6-phosphogluconolactonase subfamily.

It catalyses the reaction 6-phospho-D-glucono-1,5-lactone + H2O = 6-phospho-D-gluconate + H(+). The protein operates within carbohydrate degradation; pentose phosphate pathway; D-ribulose 5-phosphate from D-glucose 6-phosphate (oxidative stage): step 2/3. Functionally, hydrolysis of 6-phosphogluconolactone to 6-phosphogluconate. The chain is 6-phosphogluconolactonase (pgl) from Neisseria meningitidis serogroup A / serotype 4A (strain DSM 15465 / Z2491).